Consider the following 207-residue polypeptide: MLRSLVQNPRVRARVLERVDEFRLNNLSNEEVWFRELTLCLLTANSSFISAYQALNCLGDKIYYANEEVIRSILKSCKYRFYNLKAKYIIMAREKVYGKLKEEITPLADSDQQLAREKLLNIKGIGMKEASHFLRNVGYFDLAIIDRHLIDFMRRIGAIGETNVKHLSKSRYISLESVLKSIALNLNISVGILDLFIWYKETNTIVK.

Residues Lys128 and Asp146 contribute to the active site.

This sequence belongs to the type-2 OGG1 family.

It carries out the reaction 2'-deoxyribonucleotide-(2'-deoxyribose 5'-phosphate)-2'-deoxyribonucleotide-DNA = a 3'-end 2'-deoxyribonucleotide-(2,3-dehydro-2,3-deoxyribose 5'-phosphate)-DNA + a 5'-end 5'-phospho-2'-deoxyribonucleoside-DNA + H(+). Catalyzes the excision of an oxidatively damaged form of guanine (7,8-dihydro-8-oxoguanine = 8-oxoG) from DNA. Also cleaves the DNA backbone at apurinic/apyrimidinic sites (AP sites). This is 8-oxoguanine DNA glycosylase/AP lyase from Saccharolobus islandicus (strain L.S.2.15 / Lassen #1) (Sulfolobus islandicus).